Reading from the N-terminus, the 497-residue chain is MACRRRLLPCAGLGLFGVLCWVWVSFASFPDDQLPLEVFDTVDRGAFLPQSAFREMEFASIASYKGPGNTDGRSNKQLPILLWWSAGLFPHFPGDTERIDCALSSCLVTSNRKVQLYKRTASIIFYGTDFRAYEAPLPRLPHQTWALFHEESPMNNYFLSHAPGIRLFNYTATFRRESDYPLTLQWLPSLDYLLRPVAVSLEEKNRLRREGMAPVLYMQSHCDVPSDRDRYVQELMKYIQVDSYGKCLKNKPLPEHLEDTATATGEEPGFMNFVARYKFHLAFENGLCPDYMTEKLWRPLHQGCVPVYRGSPAVADWMPNGHAAIIIDNFPSPKALADFLRHLDENDDEYTRYLEFKNLKSITNTRLLEALETREWGVNDMSKPNYLNGFECYVCDQENARLAAERAHRKDPERNPPPLPKMASNSHMGCPLPSPGYGQVQDLPADDGWLQIWPQDYWQSLDQAEGLESLIRHNESDPSLLWRHIQSITERRARGKH.

Residues 1 to 6 (MACRRR) lie on the Cytoplasmic side of the membrane. A helical; Signal-anchor for type II membrane protein membrane pass occupies residues 7–27 (LLPCAGLGLFGVLCWVWVSFA). Topologically, residues 28-497 (SFPDDQLPLE…ITERRARGKH (470 aa)) are lumenal. Asn169 carries an N-linked (GlcNAc...) asparagine glycan. A disulfide bridge connects residues Cys392 and Cys395. The segment at 406-427 (RAHRKDPERNPPPLPKMASNSH) is disordered. Residue Asn474 is glycosylated (N-linked (GlcNAc...) asparagine).

Belongs to the glycosyltransferase 10 family.

It localises to the endoplasmic reticulum membrane. It carries out the reaction L-threonyl-[protein] + GDP-beta-L-fucose = 3-O-(alpha-L-fucosyl)-L-threonyl-[protein] + GDP + H(+). The catalysed reaction is L-seryl-[protein] + GDP-beta-L-fucose = 3-O-(alpha-L-fucosyl)-L-seryl-[protein] + GDP + H(+). It functions in the pathway protein modification; protein glycosylation. Protein O-fucosyltransferase that specifically catalyzes O-fucosylation of serine or threonine residues in EMI domains of target proteins. Attaches fucose through an O-glycosidic linkage. O-fucosylation of EMI domain-containing proteins may be required for facilitating protein folding and secretion. This is GDP-fucose protein O-fucosyltransferase 4 (fut11) from Oryzias latipes (Japanese rice fish).